We begin with the raw amino-acid sequence, 393 residues long: Chalcone synthase 3 (393 aa).

Cysteine 166 is an active-site residue.

It belongs to the thiolase-like superfamily. Chalcone/stilbene synthases family.

It carries out the reaction (E)-4-coumaroyl-CoA + 3 malonyl-CoA + 3 H(+) = 2',4,4',6'-tetrahydroxychalcone + 3 CO2 + 4 CoA. The protein operates within secondary metabolite biosynthesis; flavonoid biosynthesis. Its function is as follows. The primary product of this enzyme is 4,2',4',6'-tetrahydroxychalcone (also termed naringenin-chalcone or chalcone) which can under specific conditions spontaneously isomerize into naringenin. This is Chalcone synthase 3 (CHS3) from Ruta graveolens (Common rue).